A 462-amino-acid polypeptide reads, in one-letter code: MSNRMWGGRFASGPAEIMEEINASIGFDKRLAPQDIRGSLAHVAMLGKTGILPQADVAAIEAGLKTVQAEIESGAFTFQRALEDIHMNVESRLTELVGPAAGRLHTARSRNDQVATDMRLWVRDTLDALDAQAADLQRALAALALAHSGTVMPGFTHLQSAQPVTFGHHLLAYVEMLGRDRGRFRDARARLNECPLGAAALAGTSFPIDRHATAAALGFDRPTANSLDSVADRDFALEALAAAAIAAVHLSRFAEEIVVWTSAQFGFVRLSDRYTTGSSIMPQKRNPDAAELVRAKAGRVIGALAGLLIVMKGLPLAYSKDMQEDKEGTFDALQTLSLCLAAMTGMVRDLEPVPEVLKAAAGAGYATATDLADWLVRELGLPFRDAHHVTGRLVGRASARGVGLEALSLAEMREEEPRITEAVYAVLGVENSVASRTSYGGTAPANVRAQAERWLAALGDTQ.

It belongs to the lyase 1 family. Argininosuccinate lyase subfamily.

Its subcellular location is the cytoplasm. It catalyses the reaction 2-(N(omega)-L-arginino)succinate = fumarate + L-arginine. It functions in the pathway amino-acid biosynthesis; L-arginine biosynthesis; L-arginine from L-ornithine and carbamoyl phosphate: step 3/3. The chain is Argininosuccinate lyase from Methylobacterium sp. (strain 4-46).